Consider the following 545-residue polypeptide: Phenylalanine--tRNA ligase beta subunit (545 aa).

Residues 268-343 (FLHKIQNVRE…MSIGYNNLEP (76 aa)) form the B5 domain. Asp-321, Asp-327, Glu-330, and Asp-331 together coordinate Mg(2+).

Belongs to the phenylalanyl-tRNA synthetase beta subunit family. Type 2 subfamily. In terms of assembly, tetramer of two alpha and two beta subunits. The cofactor is Mg(2+).

The protein localises to the cytoplasm. It carries out the reaction tRNA(Phe) + L-phenylalanine + ATP = L-phenylalanyl-tRNA(Phe) + AMP + diphosphate + H(+). In Saccharolobus islandicus (strain M.14.25 / Kamchatka #1) (Sulfolobus islandicus), this protein is Phenylalanine--tRNA ligase beta subunit.